The chain runs to 356 residues: Putative transposase y4zB (356 aa).

Low complexity predominate over residues 1 to 19 (MITTGTPTTRRSAAGTAGA). 2 disordered regions span residues 1 to 54 (MITT…PLAD) and 334 to 356 (PPPVNPSHRRPRCSPHQMSFAYV).

This sequence belongs to the transposase 11 family.

The polypeptide is Putative transposase y4zB (Sinorhizobium fredii (strain NBRC 101917 / NGR234)).